The following is a 371-amino-acid chain: tRNA-specific 2-thiouridylase MnmA (371 aa).

Residues 13–20 and methionine 39 contribute to the ATP site; that span reads GMSGGVDS. The interaction with target base in tRNA stretch occupies residues 99-101; that stretch reads NPD. The active-site Nucleophile is cysteine 104. Cysteine 104 and cysteine 200 are joined by a disulfide. Glycine 128 lines the ATP pocket. The interval 150 to 152 is interaction with tRNA; sequence KDQ. Catalysis depends on cysteine 200, which acts as the Cysteine persulfide intermediate. The interaction with tRNA stretch occupies residues 308-309; sequence RY.

Belongs to the MnmA/TRMU family.

It localises to the cytoplasm. The catalysed reaction is S-sulfanyl-L-cysteinyl-[protein] + uridine(34) in tRNA + AH2 + ATP = 2-thiouridine(34) in tRNA + L-cysteinyl-[protein] + A + AMP + diphosphate + H(+). Its function is as follows. Catalyzes the 2-thiolation of uridine at the wobble position (U34) of tRNA, leading to the formation of s(2)U34. The chain is tRNA-specific 2-thiouridylase MnmA from Listeria monocytogenes serotype 4b (strain CLIP80459).